Reading from the N-terminus, the 120-residue chain is NAD(P)H-quinone oxidoreductase subunit 3, chloroplastic (120 aa).

A run of 3 helical transmembrane segments spans residues 9–29 (IFWAFLIISSVIPILAFLISG), 64–84 (MFALVFVVFDVETVFLYPWAM), and 88–108 (VLGVPVFIEALIFVLILIVGS).

The protein belongs to the complex I subunit 3 family. In terms of assembly, NDH is composed of at least 16 different subunits, 5 of which are encoded in the nucleus.

It localises to the plastid. Its subcellular location is the chloroplast thylakoid membrane. It carries out the reaction a plastoquinone + NADH + (n+1) H(+)(in) = a plastoquinol + NAD(+) + n H(+)(out). The enzyme catalyses a plastoquinone + NADPH + (n+1) H(+)(in) = a plastoquinol + NADP(+) + n H(+)(out). NDH shuttles electrons from NAD(P)H:plastoquinone, via FMN and iron-sulfur (Fe-S) centers, to quinones in the photosynthetic chain and possibly in a chloroplast respiratory chain. The immediate electron acceptor for the enzyme in this species is believed to be plastoquinone. Couples the redox reaction to proton translocation, and thus conserves the redox energy in a proton gradient. The protein is NAD(P)H-quinone oxidoreductase subunit 3, chloroplastic of Platanus occidentalis (Sycamore).